A 121-amino-acid chain; its full sequence is Alpha-endosulfine (121 aa).

A disordered region spans residues 1–53 (MSQKQEEENPAEETGEEKQDTQEKEGILPERAEEAKLKAKYPSLGQKPGGSDF). Ser2 carries the N-acetylserine modification. Ser2 is subject to Phosphoserine. The span at 16 to 37 (EEKQDTQEKEGILPERAEEAKL) shows a compositional bias: basic and acidic residues. Phosphothreonine is present on Thr21. Phosphoserine is present on Ser43. Ser67 bears the Phosphoserine; by GWL mark. Residues 79–121 (NKQLPSAGPDKNLVTGDHIPTPQDLPQRKSSLVTSKLAGGQVE) form a disordered region. Position 109 is a phosphoserine; by PKA (Ser109).

It belongs to the endosulfine family. In terms of assembly, interacts (when phosphorylated at Ser-67) with PPP2R2D. Interacts with ABCC8. Interacts with SNCA; interaction is disrupted when phosphorylated at Ser-109. Phosphorylation at Ser-67 by GWL during mitosis is essential for interaction with PPP2R2D (PR55-delta) and subsequent inactivation of PP2A. Phosphorylated by PKA. As to expression, widely expressed with high levels in skeletal muscle and brain and lower levels in the pancreas.

It localises to the cytoplasm. In terms of biological role, protein phosphatase inhibitor that specifically inhibits protein phosphatase 2A (PP2A) during mitosis. When phosphorylated at Ser-67 during mitosis, specifically interacts with PPP2R2D (PR55-delta) and inhibits its activity, leading to inactivation of PP2A, an essential condition to keep cyclin-B1-CDK1 activity high during M phase. Also acts as a stimulator of insulin secretion by interacting with sulfonylurea receptor (ABCC8), thereby preventing sulfonylurea from binding to its receptor and reducing K(ATP) channel currents. This is Alpha-endosulfine (ENSA) from Homo sapiens (Human).